A 999-amino-acid polypeptide reads, in one-letter code: Cytoplasmic dynein 2 intermediate chain 1 (999 aa).

Basic and acidic residues-rich tracts occupy residues 1 to 19 (MEPG…DDLR), 29 to 138 (PKEE…EEIR), 146 to 260 (LLSR…EDRH), and 268 to 300 (GLHY…KELE). The tract at residues 1–350 (MEPGKRRTKD…EHEAREKAEE (350 aa)) is disordered. The residue at position 250 (S250) is a Phosphoserine. The segment covering 318–338 (LEDDFVDYEDDFEVCDGDDDS) has biased composition (acidic residues). Over residues 339 to 350 (NNEHEAREKAEE) the composition is skewed to basic and acidic residues. The binding to the DYNLT2B-DYNLT1/DYNLT3 dimer stretch occupies residues 416-495 (ASHRQKSRSQ…DIQTEDIETR (80 aa)). WD repeat units lie at residues 637-677 (ICES…RIHH), 718-764 (AYKK…KADI), 850-890 (VRPI…PIMQ), and 895-935 (TSGH…LGPV).

Belongs to the dynein light intermediate chain family. In terms of assembly, intermediate chain of the cytoplasmic dynein complex 2, a multisubunit complex, composed at least of eleven different proteins. The cytoplasmic dynein 2 complex consists of two catalytic heavy chains (HCs) and a number of non-catalytic subunits presented by intermediate chains (ICs), light intermediate chains (LICs) and light chains (LCs). Among them, a heavy chain (DYNC2H1), two intermediate chains (DYNC2I2 and DYNC2I1), a light intermediate chain (DYNC2LI1), and a light chain (DYNLT2B) are unique to the cytoplasmic dynein complex 2, but a subset of the light chains are also shared by dynein-1 and dynein-2 complexes. Interacts with DYNC2I2; their C-terminal domains each bind a copy of the heavy chain, and their extended N-terminal regions are held together by an array of light chain dimers. Interacts with DYNLT2B. Interacts (via the N-terminal half) with DYNLT2B-DYNLT1 dimer or with DYNLT2B-DYNLT3 dimer; this interaction is crucial for retrograde trafficking of ciliary proteins.

The protein localises to the cell projection. It is found in the cilium. It localises to the cytoplasm. Its subcellular location is the cytoskeleton. The protein resides in the microtubule organizing center. The protein localises to the centrosome. Acts as one of several non-catalytic accessory components of the cytoplasmic dynein 2 complex (dynein-2 complex), a motor protein complex that drives the movement of cargos along microtubules within cilia and flagella in concert with the intraflagellar transport (IFT) system. DYNC2I1 plays a major role in retrograde ciliary protein trafficking in cilia and flagella. Also requires to maintain a functional transition zone. The protein is Cytoplasmic dynein 2 intermediate chain 1 (Dync2i1) of Mus musculus (Mouse).